The following is a 302-amino-acid chain: ATP synthase gamma chain (302 aa).

Belongs to the ATPase gamma chain family. As to quaternary structure, F-type ATPases have 2 components, CF(1) - the catalytic core - and CF(0) - the membrane proton channel. CF(1) has five subunits: alpha(3), beta(3), gamma(1), delta(1), epsilon(1). CF(0) has three main subunits: a, b and c.

The protein resides in the cell membrane. Produces ATP from ADP in the presence of a proton gradient across the membrane. The gamma chain is believed to be important in regulating ATPase activity and the flow of protons through the CF(0) complex. The sequence is that of ATP synthase gamma chain from Kineococcus radiotolerans (strain ATCC BAA-149 / DSM 14245 / SRS30216).